The following is a 606-amino-acid chain: UvrABC system protein C (606 aa).

A GIY-YIG domain is found at 18–96 (SQPGVYRMMN…IKSLNPRYNI (79 aa)). A UVR domain is found at 205 to 240 (TEVLKSITRKMHEAAEEQEYEQAALFRDQIQSLRKI).

This sequence belongs to the UvrC family. In terms of assembly, interacts with UvrB in an incision complex.

The protein resides in the cytoplasm. The UvrABC repair system catalyzes the recognition and processing of DNA lesions. UvrC both incises the 5' and 3' sides of the lesion. The N-terminal half is responsible for the 3' incision and the C-terminal half is responsible for the 5' incision. This is UvrABC system protein C from Nitrosospira multiformis (strain ATCC 25196 / NCIMB 11849 / C 71).